The sequence spans 157 residues: Transcription elongation factor GreA (157 aa).

Residues 12-74 (LKKLEEELEY…TLEAMLKNAK (63 aa)) adopt a coiled-coil conformation.

This sequence belongs to the GreA/GreB family.

Its function is as follows. Necessary for efficient RNA polymerase transcription elongation past template-encoded arresting sites. The arresting sites in DNA have the property of trapping a certain fraction of elongating RNA polymerases that pass through, resulting in locked ternary complexes. Cleavage of the nascent transcript by cleavage factors such as GreA or GreB allows the resumption of elongation from the new 3'terminus. GreA releases sequences of 2 to 3 nucleotides. This Thermoanaerobacter pseudethanolicus (strain ATCC 33223 / 39E) (Clostridium thermohydrosulfuricum) protein is Transcription elongation factor GreA.